A 180-amino-acid chain; its full sequence is Large ribosomal subunit protein uL6 (180 aa).

This sequence belongs to the universal ribosomal protein uL6 family. As to quaternary structure, part of the 50S ribosomal subunit.

This protein binds to the 23S rRNA, and is important in its secondary structure. It is located near the subunit interface in the base of the L7/L12 stalk, and near the tRNA binding site of the peptidyltransferase center. The protein is Large ribosomal subunit protein uL6 of Dictyoglomus thermophilum (strain ATCC 35947 / DSM 3960 / H-6-12).